The chain runs to 509 residues: Putative ATP-dependent RNA helicase QP509L (509 aa).

The Helicase ATP-binding domain occupies 110–262 (KKLLSPYGRF…KIILHHLGQP (153 aa)). Residue 123-130 (LNTGLGKT) coordinates ATP. Positions 215 to 218 (DEAH) match the DEAH box motif.

The protein belongs to the DEAD box helicase family. DEAH subfamily.

The catalysed reaction is ATP + H2O = ADP + phosphate + H(+). The polypeptide is Putative ATP-dependent RNA helicase QP509L (Ornithodoros (relapsing fever ticks)).